A 429-amino-acid chain; its full sequence is Adenylosuccinate synthetase (429 aa).

GTP contacts are provided by residues 12–18 (GDEGKGK) and 40–42 (GHT). Aspartate 13 (proton acceptor) is an active-site residue. Residues aspartate 13 and glycine 40 each contribute to the Mg(2+) site. Residues 13 to 16 (DEGK), 38 to 41 (NAGH), threonine 129, arginine 143, glutamine 223, threonine 238, and arginine 302 each bind IMP. Histidine 41 acts as the Proton donor in catalysis. Position 298–304 (298–304 (TVTGRQR)) interacts with substrate. Residues arginine 304, 330–332 (KID), and 412–414 (STS) contribute to the GTP site.

Belongs to the adenylosuccinate synthetase family. Homodimer. The cofactor is Mg(2+).

The protein resides in the cytoplasm. The enzyme catalyses IMP + L-aspartate + GTP = N(6)-(1,2-dicarboxyethyl)-AMP + GDP + phosphate + 2 H(+). It participates in purine metabolism; AMP biosynthesis via de novo pathway; AMP from IMP: step 1/2. Plays an important role in the de novo pathway of purine nucleotide biosynthesis. Catalyzes the first committed step in the biosynthesis of AMP from IMP. This chain is Adenylosuccinate synthetase, found in Erythrobacter litoralis (strain HTCC2594).